The primary structure comprises 447 residues: UPF0210 protein LSL_0162 (447 aa).

The protein belongs to the UPF0210 family. As to quaternary structure, homodimer.

The sequence is that of UPF0210 protein LSL_0162 from Ligilactobacillus salivarius (strain UCC118) (Lactobacillus salivarius).